A 394-amino-acid polypeptide reads, in one-letter code: MDLCHPEPAELSSGETEELQRIKWHRKQLLEDIQKLKDEIADVFAQIDCFESAEESRMAQKEKELCIGRKKFNMDPAKGIQYFIEHKLLTPDVQDIARFLYKGEGLNKTAIGTYLGERDPINLQVLQAFVDCHEFANLNLVQALRQFLWSFRLPGEAQKIDRMMEAFATRYCLCNPGVFQSTDTCYVLSFSIIMLNTSLHNPNVRDRPPFERFVSMNRGINNGSDLPEDQLRNLFDSIKSEPFSIPEDDGNDLTHTFFNPDREGWLLKLGGRVKTWKRRWFILTDNCLYYFEFTTDKEPRGIIPLENLSVQKVDDPKKPFCLELYNPSCRGQKIKACKTDGDGRVVEGKHESYRISATSAEERDQWIESIRASITRVPFYDLVSTRKKKIASKQ.

Positions 12–65 (SSGETEELQRIKWHRKQLLEDIQKLKDEIADVFAQIDCFESAEESRMAQKEKEL) form a coiled coil. The SEC7 domain occupies 54–241 (EESRMAQKEK…RNLFDSIKSE (188 aa)). A PH domain is found at 259-375 (NPDREGWLLK…WIESIRASIT (117 aa)). A 1,2-diacyl-sn-glycero-3-phospho-(1D-myo-inositol-3,4,5-trisphosphate) is bound by residues 268–275 (KLGGRVKT), Arg279, Tyr290, and Arg300. A C-terminal autoinhibitory region region spans residues 386 to 394 (RKKKIASKQ).

In terms of tissue distribution, expressed predominantly in peripheral blood leukocytes.

Its subcellular location is the cell membrane. Its function is as follows. Promotes guanine-nucleotide exchange on ARF1 and ARF5. Promotes the activation of ARF factors through replacement of GDP with GTP. The protein is Cytohesin-4 (CYTH4) of Homo sapiens (Human).